A 692-amino-acid chain; its full sequence is Mitogen-activated protein kinase kinase kinase 7-interacting protein 3 homolog (692 aa).

Positions 8-51 (LDIQVLNDLQQRFPEIPRDVVSQCMLQNNSNLDACYRALTQESC) constitute a CUE domain. 3 disordered regions span residues 138–159 (NDQNRNSPTPPPQPVQQPGVGT), 206–333 (YGTP…PYGP), and 349–427 (SQQR…VVMS). Polar residues-rich tracts occupy residues 215-230 (PSQNSPGRQTQQNTAW), 249-298 (QSFQ…QTSH), and 349-387 (SQQRPGPTLNRSPSPINNQSAQRSQQHPVYVSNARSGSP). Low complexity predominate over residues 409-422 (SQPPTTTGSPTPSS). Residues 496–580 (ALLLHQRARM…QKEIDLLQSR (85 aa)) adopt a coiled-coil conformation. A disordered region spans residues 598-662 (SPGPAVPPNT…SPRPGRDEDF (65 aa)). Residues 608 to 620 (CKKESSETTSGER) are compositionally biased toward basic and acidic residues. A RanBP2-type zinc finger spans residues 662–692 (FEGSPWNCNSCTFLNHPALNRCEQCEMPRFT).

May play a role in signaling pathway. This Xenopus laevis (African clawed frog) protein is Mitogen-activated protein kinase kinase kinase 7-interacting protein 3 homolog (map3k7ip3).